The chain runs to 230 residues: PKHD-type hydroxylase PD_1553 (230 aa).

Positions 78 to 182 (RTLPPRFNRY…RIASFFWVQS (105 aa)) constitute a Fe2OG dioxygenase domain. Positions 96, 98, and 163 each coordinate Fe cation. Position 173 (Arg-173) interacts with 2-oxoglutarate.

It depends on Fe(2+) as a cofactor. L-ascorbate serves as cofactor.

The sequence is that of PKHD-type hydroxylase PD_1553 from Xylella fastidiosa (strain Temecula1 / ATCC 700964).